A 229-amino-acid polypeptide reads, in one-letter code: Flagellar L-ring protein (229 aa).

The N-terminal stretch at 1 to 23 (MLSRLGARVLYCLAGLALLASGG) is a signal peptide. Cys-24 carries N-palmitoyl cysteine lipidation. Residue Cys-24 is the site of S-diacylglycerol cysteine attachment.

Belongs to the FlgH family. The basal body constitutes a major portion of the flagellar organelle and consists of four rings (L,P,S, and M) mounted on a central rod.

It is found in the cell outer membrane. Its subcellular location is the bacterial flagellum basal body. Functionally, assembles around the rod to form the L-ring and probably protects the motor/basal body from shearing forces during rotation. This chain is Flagellar L-ring protein, found in Cupriavidus pinatubonensis (strain JMP 134 / LMG 1197) (Cupriavidus necator (strain JMP 134)).